Consider the following 205-residue polypeptide: Small ribosomal subunit protein uS4 (205 aa).

A disordered region spans residues 18–46; that stretch reads NIWGRPKSPVNSRAYGPGQHGQRRKSKVS. The region spanning 94 to 155 is the S4 RNA-binding domain; that stretch reads SRLDAVVYRA…RSRNMALVLE (62 aa).

This sequence belongs to the universal ribosomal protein uS4 family. In terms of assembly, part of the 30S ribosomal subunit. Contacts protein S5. The interaction surface between S4 and S5 is involved in control of translational fidelity.

In terms of biological role, one of the primary rRNA binding proteins, it binds directly to 16S rRNA where it nucleates assembly of the body of the 30S subunit. With S5 and S12 plays an important role in translational accuracy. The polypeptide is Small ribosomal subunit protein uS4 (Phenylobacterium zucineum (strain HLK1)).